The chain runs to 470 residues: 1-aminocyclopropane-1-carboxylate synthase 9 (470 aa).

The substrate site is built by E47 and Y85. K272 is subject to N6-(pyridoxal phosphate)lysine.

This sequence belongs to the class-I pyridoxal-phosphate-dependent aminotransferase family. As to quaternary structure, homodimer and heterodimer. In vivo, the relevance of heterodimerization with other ACS enzymes is however unsure. Interacts (via its C-terminal region) with FEI1, FEI2, ETO1 and EOL1. Pyridoxal 5'-phosphate serves as cofactor. May be processed at its C-terminus. As to expression, expressed in roots and siliques.

The catalysed reaction is S-adenosyl-L-methionine = 1-aminocyclopropane-1-carboxylate + S-methyl-5'-thioadenosine + H(+). Its pathway is alkene biosynthesis; ethylene biosynthesis via S-adenosyl-L-methionine; ethylene from S-adenosyl-L-methionine: step 1/2. In terms of biological role, 1-aminocyclopropane-1-carboxylate synthase (ACS) enzymes catalyze the conversion of S-adenosyl-L-methionine (SAM) into 1-aminocyclopropane-1-carboxylate (ACC), a direct precursor of ethylene. The sequence is that of 1-aminocyclopropane-1-carboxylate synthase 9 (ACS9) from Arabidopsis thaliana (Mouse-ear cress).